Here is a 301-residue protein sequence, read N- to C-terminus: Protoheme IX farnesyltransferase (301 aa).

9 helical membrane passes run 34 to 54, 55 to 75, 102 to 121, 125 to 144, 152 to 172, 181 to 201, 222 to 242, 247 to 267, and 280 to 300; these read LVVF…HPLI, GLVS…FNMW, AWEC…AIAV, SALL…TMLL, IVIG…SVSG, LFAI…LLTL, SHIL…GLFV, LYEI…IAVF, and GLFK…IACV.

This sequence belongs to the UbiA prenyltransferase family. Protoheme IX farnesyltransferase subfamily.

The protein localises to the cell inner membrane. It catalyses the reaction heme b + (2E,6E)-farnesyl diphosphate + H2O = Fe(II)-heme o + diphosphate. The protein operates within porphyrin-containing compound metabolism; heme O biosynthesis; heme O from protoheme: step 1/1. Functionally, converts heme B (protoheme IX) to heme O by substitution of the vinyl group on carbon 2 of heme B porphyrin ring with a hydroxyethyl farnesyl side group. This chain is Protoheme IX farnesyltransferase, found in Anaplasma marginale (strain Florida).